Here is a 799-residue protein sequence, read N- to C-terminus: Putative mRNA-capping enzyme P5 (799 aa).

This sequence belongs to the phytoreovirus protein P5 family.

The protein resides in the virion. The protein localises to the host cytoplasm. It carries out the reaction a 5'-end diphospho-ribonucleoside in mRNA + GTP + H(+) = a 5'-end (5'-triphosphoguanosine)-ribonucleoside in mRNA + diphosphate. Its pathway is mRNA processing; mRNA capping. Its function is as follows. Enzyme involved in mRNA capping (Potential). Binds to GTP and might have guanylyltransferase activity. Together with the RNA-directed RNA polymerase P1 and protein P7, forms an transcriptional complex positioned near the channels situated at each of the five-fold vertices of the core. The protein is Putative mRNA-capping enzyme P5 of Nephotettix cincticeps (Green rice leafhopper).